We begin with the raw amino-acid sequence, 210 residues long: Holliday junction resolvase RecU (210 aa).

A disordered region spans residues 1-34; it reads MAFHYPNGQPYSNHETKQPKKQGRHTSPTTLYGK. Mg(2+) is bound by residues threonine 90, aspartate 92, glutamate 105, and glutamine 124.

Belongs to the RecU family. The cofactor is Mg(2+).

It is found in the cytoplasm. The enzyme catalyses Endonucleolytic cleavage at a junction such as a reciprocal single-stranded crossover between two homologous DNA duplexes (Holliday junction).. Its function is as follows. Endonuclease that resolves Holliday junction intermediates in genetic recombination. Cleaves mobile four-strand junctions by introducing symmetrical nicks in paired strands. Promotes annealing of linear ssDNA with homologous dsDNA. Required for DNA repair, homologous recombination and chromosome segregation. The chain is Holliday junction resolvase RecU from Latilactobacillus sakei subsp. sakei (strain 23K) (Lactobacillus sakei subsp. sakei).